The sequence spans 498 residues: ATP synthase subunit beta, chloroplastic (498 aa).

172-179 provides a ligand contact to ATP; sequence GGAGVGKT.

The protein belongs to the ATPase alpha/beta chains family. In terms of assembly, F-type ATPases have 2 components, CF(1) - the catalytic core - and CF(0) - the membrane proton channel. CF(1) has five subunits: alpha(3), beta(3), gamma(1), delta(1), epsilon(1). CF(0) has four main subunits: a(1), b(1), b'(1) and c(9-12).

Its subcellular location is the plastid. The protein localises to the chloroplast thylakoid membrane. It carries out the reaction ATP + H2O + 4 H(+)(in) = ADP + phosphate + 5 H(+)(out). Functionally, produces ATP from ADP in the presence of a proton gradient across the membrane. The catalytic sites are hosted primarily by the beta subunits. This chain is ATP synthase subunit beta, chloroplastic, found in Citrus sinensis (Sweet orange).